A 188-amino-acid chain; its full sequence is Protein TIFY 9 (188 aa).

The interval 20–41 (DADDRHAKSGGSSASSSSSIRG) is disordered. Over residues 28–38 (SGGSSASSSSS) the composition is skewed to low complexity. The region spanning 80 to 114 (AAAAAAPMTLFYNGSVAVFDVSHDKAEAIMRMATE) is the Tify domain. Residues 135-160 (PLTRTKSLQRFLSKRKERLTSLGPYQ) carry the Jas motif. Residues 156–188 (LGPYQVGGPAAVGATTSTTTKSFLAKEEEHTAS) are disordered. Over residues 179 to 188 (LAKEEEHTAS) the composition is skewed to basic and acidic residues.

This sequence belongs to the TIFY/JAZ family. As to quaternary structure, interacts with COI1A and COI2 in a coronatine-dependent manner. Coronatine is an analog of jasmonoyl isoleucine (JA-Ile). In terms of processing, ubiquitinated. Targeted for degradation by the SCF(COI1) E3 ubiquitin ligase-proteasome pathway during jasmonate signaling.

Its function is as follows. Repressor of jasmonate responses. The protein is Protein TIFY 9 of Oryza sativa subsp. japonica (Rice).